Reading from the N-terminus, the 550-residue chain is Sterol O-acyltransferase 1 (550 aa).

Met-1 is subject to N-acetylmethionine. The segment at 1-36 (MVGEEKMSLRNRLSKSRENPEEDEDQRKPAKESLEA) is disordered. Residues 1–138 (MVGEEKMSLR…LDELLEVDHI (138 aa)) lie on the Cytoplasmic side of the membrane. At Ser-8 the chain carries Phosphoserine. The segment covering 15–34 (KSRENPEEDEDQRKPAKESL) has biased composition (basic and acidic residues). His-137 is a cholesterol binding site. Residues 139-160 (RTIYHMFIALLILFILSTLVVD) form a helical membrane-spanning segment. At 161–180 (YIDEGRLVLEFSLLSYAFGK) the chain is on the lumenal side. Residues 181–206 (FPTVVWTWWIMFLSTFSVPYFLFQRW) form a helical membrane-spanning segment. The Cytoplasmic portion of the chain corresponds to 207–218 (ATGYSKSSHPLI). Residues 219–244 (NSLFHGFLFMVFQIGILGFGPTYVVL) traverse the membrane as a helical segment. Residues 245 to 252 (AYTLPPAS) are Lumenal-facing. The helical transmembrane segment at 253–276 (RFIIIFEQIRFVMKAHSFVRENVP) threads the bilayer. Topologically, residues 277 to 319 (RVLNSAKEKSSTVPIPTVNQYLYFLFAPTLIYRDSYPRNPTVR) are cytoplasmic. A helical transmembrane segment spans residues 320–352 (WGYVAMQFAQVFGCFFYVYYIFERLCAPLFRNI). Topologically, residues 353-369 (KQEPFSARVLVLCVFNS) are lumenal. The chain crosses the membrane as a helical span at residues 370–395 (ILPGVLILFLTFFAFLHCWLNAFAEM). Over 396-443 (LRFGDRMFYKDWWNSTSYSNYYRTWNVVVHDWLYYYAYKDFLWFFSKR) the chain is Cytoplasmic. The FYXDWWN motif signature appears at 403-409 (FYKDWWN). 7 residues coordinate an acyl-CoA: Asn-415, Arg-418, Asn-421, His-425, Tyr-433, Lys-445, and Ser-456. A helical membrane pass occupies residues 444–468 (FKSAAMLAVFAVSAVVHEYALAVCL). The active site involves His-460. At 469–474 (SFFYPV) the chain is on the lumenal side. The chain crosses the membrane as a helical span at residues 475–490 (LFVLFMFFGMAFNFIV). Residues 491–496 (NDSRKK) lie on the Cytoplasmic side of the membrane. A helical transmembrane segment spans residues 497 to 528 (PIWNVMMWTSLFLGNGVLLCFYSQEWYARQHC). Cys-528 and Cys-546 form a disulfide bridge. Topologically, residues 529 to 550 (PLKNPTFLDYVRPRSWTCRYVF) are lumenal.

This sequence belongs to the membrane-bound acyltransferase family. Sterol o-acyltransferase subfamily. May form homo- or heterodimers. Interacts with UBIAD1. As to expression, expressed in most tissues, but most strongly in the adrenal gland. Expressed more strongly in liver Kupffer cells than in hepatocytes.

The protein resides in the endoplasmic reticulum membrane. It carries out the reaction a sterol + a long-chain fatty acyl-CoA = a long-chain 3-hydroxysterol ester + CoA. It catalyses the reaction cholesterol + an acyl-CoA = a cholesterol ester + CoA. The enzyme catalyses cholesterol + (9Z)-octadecenoyl-CoA = cholesteryl (9Z-octadecenoate) + CoA. The catalysed reaction is cholesterol + hexadecanoyl-CoA = cholesteryl hexadecanoate + CoA. It carries out the reaction octadecanoyl-CoA + cholesterol = cholesteryl octadecanoate + CoA. It catalyses the reaction (9Z,12Z)-octadecadienoyl-CoA + cholesterol = cholesteryl (9Z,12Z)-octadecadienoate + CoA. The enzyme catalyses (5Z,8Z,11Z,14Z)-eicosatetraenoyl-CoA + cholesterol = cholesteryl (5Z,8Z,11Z,14Z)-eicosatetraenoate + CoA. The catalysed reaction is (9Z)-hexadecenoyl-CoA + cholesterol = cholesteryl (9Z)-hexadecenoate + CoA. It carries out the reaction (11Z)-octadecenoyl-CoA + cholesterol = cholesteryl (11Z)-octadecenoate + CoA. It catalyses the reaction (7Z)-octadecenoyl-CoA + cholesterol = cholesteryl (7Z)-octadecenoate + CoA. Functionally, catalyzes the formation of fatty acid-cholesterol esters, which are less soluble in membranes than cholesterol. Plays a role in lipoprotein assembly and dietary cholesterol absorption. Preferentially utilizes oleoyl-CoA ((9Z)-octadecenoyl-CoA) as a substrate: shows a higher activity towards an acyl-CoA substrate with a double bond at the delta-9 position (9Z) than towards saturated acyl-CoA or an unsaturated acyl-CoA with a double bond at the delta-7 (7Z) or delta-11 (11Z) positions. This chain is Sterol O-acyltransferase 1 (SOAT1), found in Chlorocebus aethiops (Green monkey).